A 359-amino-acid chain; its full sequence is Replication-associated protein (359 aa).

A CRESS-DNA virus Rep endonuclease domain is found at 8–116 (QINAKHYFLT…DGDVLEWGTF (109 aa)). The RCR-1 motif lies at 15-18 (FLTF). 3 residues coordinate a divalent metal cation: Glu-49, His-57, and His-59. The RCR-2 signature appears at 57 to 59 (HLH). Tyr-103 serves as the catalytic For DNA cleavage activity. The RCR-3 motif lies at 103-106 (YIDK). Asp-107 contributes to the a divalent metal cation binding site. Residues 143 to 153 (KSEALDVIKEL) are binding to RBR1. An oligomerization region spans residues 156 to 176 (RDYILHFHNINSNLNMVFQVP). Position 221–228 (221–228 (GDSRTGKT)) interacts with ATP.

Belongs to the geminiviridae Rep protein family. As to quaternary structure, homooligomer. Interacts with the replication enhancer protein (REn). Interacts with host retinoblastoma-related protein 1 (RBR1), and may thereby induce the transcription of host replicative enzymes even if the cell is not dividing anymore. Interacts with host PCNA. Interacts with host SCE1 protein. Mg(2+) serves as cofactor. The cofactor is Mn(2+).

It is found in the host nucleus. Its function is as follows. Essential for the replication of viral ssDNA. The closed circular ssDNA genome is first converted to a superhelical dsDNA. Rep binds a specific region at the genome origin of replication. It introduces an endonucleolytic nick within the conserved sequence 5'-TAATATTAC-3' in the intergenic region of the genome present in all geminiviruses, thereby initiating the rolling circle replication (RCR). Following cleavage, binds covalently to the 5'-phosphate of DNA as a tyrosyl ester. The cleavage gives rise to a free 3'-OH that serves as a primer for the cellular DNA polymerase. The polymerase synthesizes the (+) strand DNA by rolling circle mechanism. After one round of replication, a Rep-catalyzed nucleotidyl transfer reaction releases a circular single-stranded virus genome, thereby terminating the replication. Displays origin-specific DNA cleavage, nucleotidyl transferase, ATPase and helicase activities. This is Replication-associated protein from Solanum lycopersicum (Tomato).